We begin with the raw amino-acid sequence, 239 residues long: Ribosomal RNA small subunit methyltransferase G (239 aa).

Residues G95, L100, 118-120 (EAT), 146-147 (AE), and R164 contribute to the S-adenosyl-L-methionine site.

This sequence belongs to the methyltransferase superfamily. RNA methyltransferase RsmG family.

The protein localises to the cytoplasm. It catalyses the reaction guanosine(527) in 16S rRNA + S-adenosyl-L-methionine = N(7)-methylguanosine(527) in 16S rRNA + S-adenosyl-L-homocysteine. In terms of biological role, specifically methylates the N7 position of guanine in position 527 of 16S rRNA. The chain is Ribosomal RNA small subunit methyltransferase G from Sorangium cellulosum (strain So ce56) (Polyangium cellulosum (strain So ce56)).